A 159-amino-acid chain; its full sequence is 2-C-methyl-D-erythritol 2,4-cyclodiphosphate synthase (159 aa).

Residues aspartate 10 and histidine 12 each coordinate a divalent metal cation. 4-CDP-2-C-methyl-D-erythritol 2-phosphate contacts are provided by residues 10–12 (DVH) and 36–37 (HS). Histidine 44 contacts a divalent metal cation. Residues 58 to 60 (DIG), 134 to 137 (TTSE), phenylalanine 141, and arginine 144 contribute to the 4-CDP-2-C-methyl-D-erythritol 2-phosphate site.

This sequence belongs to the IspF family. Homotrimer. The cofactor is a divalent metal cation.

The enzyme catalyses 4-CDP-2-C-methyl-D-erythritol 2-phosphate = 2-C-methyl-D-erythritol 2,4-cyclic diphosphate + CMP. The protein operates within isoprenoid biosynthesis; isopentenyl diphosphate biosynthesis via DXP pathway; isopentenyl diphosphate from 1-deoxy-D-xylulose 5-phosphate: step 4/6. Functionally, involved in the biosynthesis of isopentenyl diphosphate (IPP) and dimethylallyl diphosphate (DMAPP), two major building blocks of isoprenoid compounds. Catalyzes the conversion of 4-diphosphocytidyl-2-C-methyl-D-erythritol 2-phosphate (CDP-ME2P) to 2-C-methyl-D-erythritol 2,4-cyclodiphosphate (ME-CPP) with a corresponding release of cytidine 5-monophosphate (CMP). This Roseobacter denitrificans (strain ATCC 33942 / OCh 114) (Erythrobacter sp. (strain OCh 114)) protein is 2-C-methyl-D-erythritol 2,4-cyclodiphosphate synthase.